The primary structure comprises 356 residues: DNA polymerase IV (356 aa).

The UmuC domain occupies 6–186 (IVHIDMDAFY…LPVDAFHGIG (181 aa)). 2 residues coordinate Mg(2+): aspartate 10 and aspartate 104. Glutamate 105 is an active-site residue.

It belongs to the DNA polymerase type-Y family. Monomer. Mg(2+) serves as cofactor.

It is found in the cytoplasm. It catalyses the reaction DNA(n) + a 2'-deoxyribonucleoside 5'-triphosphate = DNA(n+1) + diphosphate. Its function is as follows. Poorly processive, error-prone DNA polymerase involved in untargeted mutagenesis. Copies undamaged DNA at stalled replication forks, which arise in vivo from mismatched or misaligned primer ends. These misaligned primers can be extended by PolIV. Exhibits no 3'-5' exonuclease (proofreading) activity. May be involved in translesional synthesis, in conjunction with the beta clamp from PolIII. The protein is DNA polymerase IV of Gluconobacter oxydans (strain 621H) (Gluconobacter suboxydans).